The following is a 393-amino-acid chain: S-adenosylmethionine synthase 3 (393 aa).

Glutamate 9 contacts Mg(2+). Histidine 15 is an ATP binding site. Glutamate 43 lines the K(+) pocket. Residues glutamate 56 and glutamine 99 each contribute to the L-methionine site. ATP-binding positions include 167–169 (NGK), 235–238 (SGRF), aspartate 246, 252–253 (RK), alanine 269, lysine 273, and lysine 277. Aspartate 246 is an L-methionine binding site. L-methionine is bound at residue lysine 277.

It belongs to the AdoMet synthase family. As to quaternary structure, homotetramer. The cofactor is Mn(2+). Requires Mg(2+) as cofactor. It depends on Co(2+) as a cofactor. K(+) serves as cofactor. Mostly expressed in flowers, seedpods and roots, and, to a lower extent, in stems and leaves.

Its subcellular location is the cytoplasm. The enzyme catalyses L-methionine + ATP + H2O = S-adenosyl-L-methionine + phosphate + diphosphate. It functions in the pathway amino-acid biosynthesis; S-adenosyl-L-methionine biosynthesis; S-adenosyl-L-methionine from L-methionine: step 1/1. In terms of biological role, catalyzes the formation of S-adenosylmethionine from methionine and ATP. The reaction comprises two steps that are both catalyzed by the same enzyme: formation of S-adenosylmethionine (AdoMet) and triphosphate, and subsequent hydrolysis of the triphosphate. In Brassica juncea (Indian mustard), this protein is S-adenosylmethionine synthase 3 (MSAMS3).